Consider the following 354-residue polypeptide: 5,10-methenyltetrahydromethanopterin hydrogenase (354 aa).

It belongs to the HMD family.

It catalyses the reaction 5,10-methenyl-5,6,7,8-tetrahydromethanopterin + H2 = 5,10-methylenetetrahydromethanopterin + H(+). It participates in one-carbon metabolism; methanogenesis from CO(2); 5,10-methylene-5,6,7,8-tetrahydromethanopterin from 5,10-methenyl-5,6,7,8-tetrahydromethanopterin (hydrogen route): step 1/1. Functionally, catalyzes the reversible reduction of methenyl-H(4)MPT(+) to methylene-H(4)MPT. The protein is 5,10-methenyltetrahydromethanopterin hydrogenase of Methanococcus maripaludis (strain DSM 14266 / JCM 13030 / NBRC 101832 / S2 / LL).